Reading from the N-terminus, the 200-residue chain is Large ribosomal subunit protein uL4 (200 aa).

Residues 38 to 68 form a disordered region; the sequence is GRQGSKQQKTRSDVRGGGKRPWRQKGTGRAR. Positions 54-65 are enriched in basic residues; it reads GGKRPWRQKGTG.

The protein belongs to the universal ribosomal protein uL4 family. Part of the 50S ribosomal subunit.

Its function is as follows. One of the primary rRNA binding proteins, this protein initially binds near the 5'-end of the 23S rRNA. It is important during the early stages of 50S assembly. It makes multiple contacts with different domains of the 23S rRNA in the assembled 50S subunit and ribosome. Functionally, forms part of the polypeptide exit tunnel. The sequence is that of Large ribosomal subunit protein uL4 from Pseudomonas fluorescens (strain Pf0-1).